We begin with the raw amino-acid sequence, 434 residues long: Glutamate-1-semialdehyde 2,1-aminomutase 2 (434 aa).

K270 is modified (N6-(pyridoxal phosphate)lysine).

The protein belongs to the class-III pyridoxal-phosphate-dependent aminotransferase family. HemL subfamily. Homodimer. Pyridoxal 5'-phosphate serves as cofactor.

Its subcellular location is the cytoplasm. The catalysed reaction is (S)-4-amino-5-oxopentanoate = 5-aminolevulinate. The protein operates within porphyrin-containing compound metabolism; protoporphyrin-IX biosynthesis; 5-aminolevulinate from L-glutamyl-tRNA(Glu): step 2/2. The sequence is that of Glutamate-1-semialdehyde 2,1-aminomutase 2 from Bacillus cereus (strain G9842).